Here is a 127-residue protein sequence, read N- to C-terminus: Phosphoribosyl-AMP cyclohydrolase (127 aa).

Asp-75 serves as a coordination point for Mg(2+). Cys-76 serves as a coordination point for Zn(2+). Asp-77 and Asp-79 together coordinate Mg(2+). 2 residues coordinate Zn(2+): Cys-93 and Cys-100.

The protein belongs to the PRA-CH family. As to quaternary structure, homodimer. It depends on Mg(2+) as a cofactor. The cofactor is Zn(2+).

The protein localises to the cytoplasm. It carries out the reaction 1-(5-phospho-beta-D-ribosyl)-5'-AMP + H2O = 1-(5-phospho-beta-D-ribosyl)-5-[(5-phospho-beta-D-ribosylamino)methylideneamino]imidazole-4-carboxamide. Its pathway is amino-acid biosynthesis; L-histidine biosynthesis; L-histidine from 5-phospho-alpha-D-ribose 1-diphosphate: step 3/9. Its function is as follows. Catalyzes the hydrolysis of the adenine ring of phosphoribosyl-AMP. This Desulfotalea psychrophila (strain LSv54 / DSM 12343) protein is Phosphoribosyl-AMP cyclohydrolase.